A 322-amino-acid polypeptide reads, in one-letter code: ATP-dependent 6-phosphofructokinase (322 aa).

Gly-11 is a binding site for ATP. An ADP-binding site is contributed by 21 to 25; sequence RAVAR. Residues 72 to 73 and 102 to 105 contribute to the ATP site; these read RY and GDGS. Residue Asp-103 participates in Mg(2+) binding. 125–127 is a binding site for substrate; the sequence is TID. Residue Asp-127 is the Proton acceptor of the active site. Arg-154 provides a ligand contact to ADP. Residues Arg-162 and 169 to 171 each bind substrate; that span reads MGR. ADP-binding positions include 185-187 and 213-215; these read GAD and KDY. Substrate contacts are provided by residues Glu-222, Arg-246, and 252-255; that span reads HVQR.

Belongs to the phosphofructokinase type A (PFKA) family. ATP-dependent PFK group I subfamily. Prokaryotic clade 'B1' sub-subfamily. Homotetramer. It depends on Mg(2+) as a cofactor.

It is found in the cytoplasm. The catalysed reaction is beta-D-fructose 6-phosphate + ATP = beta-D-fructose 1,6-bisphosphate + ADP + H(+). It participates in carbohydrate degradation; glycolysis; D-glyceraldehyde 3-phosphate and glycerone phosphate from D-glucose: step 3/4. Its activity is regulated as follows. Allosterically activated by ADP and other diphosphonucleosides, and allosterically inhibited by phosphoenolpyruvate. Its function is as follows. Catalyzes the phosphorylation of D-fructose 6-phosphate to fructose 1,6-bisphosphate by ATP, the first committing step of glycolysis. This Pediococcus pentosaceus (strain ATCC 25745 / CCUG 21536 / LMG 10740 / 183-1w) protein is ATP-dependent 6-phosphofructokinase.